Reading from the N-terminus, the 141-residue chain is uncharacterized protein (141 aa).

The next 2 helical transmembrane spans lie at 64-84 (IAAVGLAVSGPGVLYKVIEAI) and 112-132 (IVGSGAAFVTALGVAAFLVLI).

It localises to the cell membrane. This is an uncharacterized protein from Sinorhizobium fredii (strain NBRC 101917 / NGR234).